The primary structure comprises 215 residues: Putative zinc finger protein ORF121 (215 aa).

The RING-type; degenerate zinc-finger motif lies at 53 to 105 (CVICMEPTYTKKTLAECDIEGGALRVTTMPCPTHYICDNCIRQEMEDKCPICR).

The protein is Putative zinc finger protein ORF121 of Magallana gigas (Pacific oyster).